A 1113-amino-acid polypeptide reads, in one-letter code: Carbamoyl phosphate synthase arginine-specific large chain (1113 aa).

The tract at residues 23 to 420 is carboxyphosphate synthetic domain; that stretch reads QLIKGIDSVL…AFQKAFRQVD (398 aa). 12 residues coordinate ATP: Arg150, Arg190, Gly196, Gly197, Lys227, Leu229, Glu234, Gly260, Ile261, His262, Gln303, and Glu317. The region spanning 154–346 is the ATP-grasp 1 domain; the sequence is ARALKEINMP…LAYTAAKIAL (193 aa). Mg(2+) is bound by residues Gln303, Glu317, and Asn319. Mn(2+) contacts are provided by Gln303, Glu317, and Asn319. The interval 421–568 is oligomerization domain; the sequence is PSLLGFQGSD…YVTYNAVKDD (148 aa). The segment at 569 to 955 is carbamoyl phosphate synthetic domain; it reads VTFGDNGIMV…SYWVALQGLM (387 aa). In terms of domain architecture, ATP-grasp 2 spans 693 to 888; the sequence is STILDTLGLD…FVEIAVKAFL (196 aa). 10 residues coordinate ATP: Arg729, Lys768, Ile770, Glu775, Gly800, Val801, His802, Ser803, Gln843, and Glu859. Positions 843, 859, and 861 each coordinate Mg(2+). Mn(2+) contacts are provided by Gln843, Glu859, and Asn861. Residues 956-1097 form an allosteric domain region; it reads SFCVPLPPSG…EMRQSDGPET (142 aa). Positions 957–1113 constitute an MGS-like domain; the sequence is FCVPLPPSGI…WREYLGFKPT (157 aa).

Belongs to the CarB family. Heterodimer composed of 2 chains; the small (or glutamine) chain promotes the hydrolysis of glutamine to ammonia, which is used by the large (or ammonia) chain to synthesize carbamoyl phosphate. Mg(2+) is required as a cofactor. Mn(2+) serves as cofactor.

The protein resides in the cytoplasm. The enzyme catalyses hydrogencarbonate + L-glutamine + 2 ATP + H2O = carbamoyl phosphate + L-glutamate + 2 ADP + phosphate + 2 H(+). It carries out the reaction hydrogencarbonate + NH4(+) + 2 ATP = carbamoyl phosphate + 2 ADP + phosphate + 2 H(+). It participates in amino-acid biosynthesis; L-arginine biosynthesis; carbamoyl phosphate from bicarbonate: step 1/1. Functionally, large subunit of the arginine-specific carbamoyl phosphate synthase (CPSase). CPSase catalyzes the formation of carbamoyl phosphate from the ammonia moiety of glutamine, hydrogencarbonate, and phosphate donated by ATP, constituting the first step of 2 biosynthetic pathways, one leading to arginine and/or urea and the other to pyrimidine nucleotides. The large subunit (synthetase) binds the substrates ammonia (free or transferred from glutamine from the small subunit), hydrogencarbonate and ATP and carries out an ATP-coupled ligase reaction, activating hydrogencarbonate by forming carboxy phosphate which reacts with ammonia to form carbamoyl phosphate. The polypeptide is Carbamoyl phosphate synthase arginine-specific large chain (CPA2) (Eremothecium gossypii (strain ATCC 10895 / CBS 109.51 / FGSC 9923 / NRRL Y-1056) (Yeast)).